The sequence spans 303 residues: tRNA dimethylallyltransferase (303 aa).

An ATP-binding site is contributed by Gly-12–Ser-19. Position 14–19 (Thr-14–Ser-19) interacts with substrate. Residues Asp-37–Gln-40 form an interaction with substrate tRNA region.

The protein belongs to the IPP transferase family. In terms of assembly, monomer. Mg(2+) serves as cofactor.

The enzyme catalyses adenosine(37) in tRNA + dimethylallyl diphosphate = N(6)-dimethylallyladenosine(37) in tRNA + diphosphate. Its function is as follows. Catalyzes the transfer of a dimethylallyl group onto the adenine at position 37 in tRNAs that read codons beginning with uridine, leading to the formation of N6-(dimethylallyl)adenosine (i(6)A). The chain is tRNA dimethylallyltransferase from Synechocystis sp. (strain ATCC 27184 / PCC 6803 / Kazusa).